The sequence spans 199 residues: Imidazoleglycerol-phosphate dehydratase (199 aa).

Belongs to the imidazoleglycerol-phosphate dehydratase family.

Its subcellular location is the cytoplasm. The enzyme catalyses D-erythro-1-(imidazol-4-yl)glycerol 3-phosphate = 3-(imidazol-4-yl)-2-oxopropyl phosphate + H2O. Its pathway is amino-acid biosynthesis; L-histidine biosynthesis; L-histidine from 5-phospho-alpha-D-ribose 1-diphosphate: step 6/9. This chain is Imidazoleglycerol-phosphate dehydratase, found in Desulfotalea psychrophila (strain LSv54 / DSM 12343).